Consider the following 218-residue polypeptide: Adenylate kinase (218 aa).

Residue 10 to 15 (GVGKGT) participates in ATP binding. The segment at 30–59 (STGDMLRSAIKQGTELGLKAKSFIDKGELV) is NMP. Residues threonine 31, arginine 36, 57–59 (ELV), 86–89 (GFPR), and glutamine 93 each bind AMP. An LID region spans residues 127–164 (GRRIAPSTGKVYHVVYNPPKVEGKCDETGEDLIIREDD). ATP-binding positions include arginine 128 and 137–138 (VY). 2 residues coordinate AMP: arginine 161 and arginine 172. Glutamine 200 contributes to the ATP binding site.

Belongs to the adenylate kinase family. As to quaternary structure, monomer.

The protein localises to the cytoplasm. The catalysed reaction is AMP + ATP = 2 ADP. It participates in purine metabolism; AMP biosynthesis via salvage pathway; AMP from ADP: step 1/1. Its function is as follows. Catalyzes the reversible transfer of the terminal phosphate group between ATP and AMP. Plays an important role in cellular energy homeostasis and in adenine nucleotide metabolism. The protein is Adenylate kinase of Chloroherpeton thalassium (strain ATCC 35110 / GB-78).